Consider the following 117-residue polypeptide: MTRIRRGYIARRRRTKIRLFASSFRGAHSRLTRTIIQQKIRALVSAHRDRDRQKRNFRRLWVTRINAVIRESTVSYSYSRLINNLYKRQLLLNRKILAQIAILNRNCLYMISNDILK.

The protein belongs to the bacterial ribosomal protein bL20 family.

The protein resides in the plastid. It localises to the chloroplast. Binds directly to 23S ribosomal RNA and is necessary for the in vitro assembly process of the 50S ribosomal subunit. It is not involved in the protein synthesizing functions of that subunit. This is Large ribosomal subunit protein bL20c from Manihot esculenta (Cassava).